Consider the following 660-residue polypeptide: Interferon-induced GTP-binding protein Mx1 (660 aa).

N-acetylmethionine is present on Met1. The span at 1–10 (MVHSEAKMTR) shows a compositional bias: basic and acidic residues. Positions 1 to 29 (MVHSEAKMTRPDSASASKQQLLNGNADIQ) are disordered. Positions 12 to 29 (DSASASKQQLLNGNADIQ) are enriched in polar residues. The Dynamin-type G domain maps to 67 to 340 (DLALPAIAVI…LITHISKSLP (274 aa)). Positions 77 to 84 (GDQSSGKS) are G1 motif. GTP is bound at residue 77-84 (GDQSSGKS). Positions 102-104 (VTR) are G2 motif. A G3 motif region spans residues 178–181 (DLPG). Residues 178–182 (DLPGI) and 247–250 (TKPD) each bind GTP. The segment at 247-250 (TKPD) is G4 motif. The interval 279–282 (KCRG) is G5 motif. A bundle signaling element (BSE) region spans residues 341 to 366 (LLENQIKESYQNLSDELQKYGTDIPE). The segment at 366–533 (EDETEKTFFL…HFQMEKIVYC (168 aa)) is middle domain. Positions 367 to 630 (DETEKTFFLI…RDTYDWLLKE (264 aa)) are stalk. Residues 554 to 557 (KKKK) form a critical for lipid-binding region. Positions 572 to 660 (MAEILEHLNA…ARRRLAKFPG (89 aa)) constitute a GED domain.

The protein belongs to the TRAFAC class dynamin-like GTPase superfamily. Dynamin/Fzo/YdjA family. In terms of assembly, homooligomer. Oligomerizes into multimeric filamentous or ring-like structures by virtue of its stalk domain. Oligomerization is critical for GTPase activity, protein stability, and recognition of viral target structures. Interacts with TRPC1, TRPC3, TRPC4, TRPC5, TRPC6 and TRPC7. Interacts with HSPA5. Interacts with TUBB/TUBB5. Interacts with DDX39A and DDX39B. Post-translationally, ISGylated.

It is found in the cytoplasm. The protein localises to the endoplasmic reticulum membrane. Its subcellular location is the perinuclear region. Functionally, interferon-induced dynamin-like GTPase with antiviral activity. In Equus caballus (Horse), this protein is Interferon-induced GTP-binding protein Mx1 (MX1).